The primary structure comprises 245 residues: Probable septum site-determining protein MinC (245 aa).

Basic and acidic residues predominate over residues 113–132 (RERPLEPLVGEEKKKPEKPP). Positions 113 to 138 (RERPLEPLVGEEKKKPEKPPEPTIKP) are disordered.

Belongs to the MinC family. Interacts with MinD and FtsZ.

Functionally, cell division inhibitor that blocks the formation of polar Z ring septums. Rapidly oscillates between the poles of the cell to destabilize FtsZ filaments that have formed before they mature into polar Z rings. Prevents FtsZ polymerization. In Pseudomonas fluorescens (strain SBW25), this protein is Probable septum site-determining protein MinC.